Reading from the N-terminus, the 561-residue chain is Sensor histidine kinase BtsS (561 aa).

Over 1-3 (MYD) the chain is Cytoplasmic. A helical membrane pass occupies residues 4–24 (FNLVLLLLQQMCVFLVIAWLM). Residues 25-43 (SKTPLFIPLMQVTVRLPHK) are Periplasmic-facing. The chain crosses the membrane as a helical span at residues 44 to 64 (FLCYIVFSIFCIMGTWFGLHI). Topologically, residues 65–72 (DDSIANTR) are cytoplasmic. Residues 73–93 (AIGAVMGGLLGGPVVGGLVGL) traverse the membrane as a helical segment. Topologically, residues 94–108 (TGGLHRYSMGGMTAL) are periplasmic. Residues 109–129 (SCMISTIVEGLLGGLVHSILI) traverse the membrane as a helical segment. At 130–140 (RRGRTDKVFNP) the chain is on the cytoplasmic side. A helical membrane pass occupies residues 141-161 (ITAGAVTFVAEMVQMLIILAI). Residues 162-170 (ARPYEDAVR) are Periplasmic-facing. Residues 171 to 191 (LVSNIAAPMMVTNTVGAALFM) form a helical membrane-spanning segment. Over 192–561 (RILLDKRAMF…TLRLPWRDEA (370 aa)) the chain is Cytoplasmic. Residues 354–559 (QILAGQYERQ…RITLRLPWRD (206 aa)) form the Histidine kinase domain.

Post-translationally, autophosphorylated.

Its subcellular location is the cell inner membrane. It catalyses the reaction ATP + protein L-histidine = ADP + protein N-phospho-L-histidine.. Its function is as follows. Member of the two-component regulatory system BtsS/BtsR. BtsS is a high-affinity receptor for extracellular pyruvate that activates BtsR by phosphorylation. The chain is Sensor histidine kinase BtsS from Escherichia coli O6:H1 (strain CFT073 / ATCC 700928 / UPEC).